The following is a 352-amino-acid chain: Cell division protein ZipA (352 aa).

Over 1–5 the chain is Periplasmic; the sequence is MQELR. Residues 6-26 traverse the membrane as a helical segment; it reads LVLIIVGALAISALLLHGLWT. Residues 27-352 are Cytoplasmic-facing; the sequence is SRKEKPAKFG…REKAKLYSQA (326 aa). Over residues 35-54 the composition is skewed to basic and acidic residues; it reads FGEKPLGKLDDSNRDTEGFD. A disordered region spans residues 35 to 56; the sequence is FGEKPLGKLDDSNRDTEGFDHT.

It belongs to the ZipA family. As to quaternary structure, interacts with FtsZ via their C-terminal domains.

It is found in the cell inner membrane. In terms of biological role, essential cell division protein that stabilizes the FtsZ protofilaments by cross-linking them and that serves as a cytoplasmic membrane anchor for the Z ring. Also required for the recruitment to the septal ring of downstream cell division proteins. This is Cell division protein ZipA from Photobacterium profundum (strain SS9).